Reading from the N-terminus, the 203-residue chain is E3 ubiquitin-protein ligase RNF152 (203 aa).

An RING-type zinc finger spans residues 12–55 (CQICFNYYSPRRRPKLLDCKHTCCSVCLQQMRTSQKDVRCPWCR). Positions 106-165 (ISKERTLLPGDMGCRLLPGSQQKSLTVVTIPAEQQPLQGGAPQEAVEEEPDRRGVAKSST) are necessary for interaction with RRAGA. The segment at 140–159 (QPLQGGAPQEAVEEEPDRRG) is disordered. A helical membrane pass occupies residues 167-187 (SGVCTVILVACVLVFLLGIVL).

This sequence belongs to the RNF152 family. In terms of assembly, interacts with RRAGA (inactive GDP-bound form); stimulated by amino acid starvation. Interacts with SEC16A. Ubiquitinated. Autoubiquitinated in vitro, leading to its degradation by the proteasome.

Its subcellular location is the lysosome membrane. The catalysed reaction is S-ubiquitinyl-[E2 ubiquitin-conjugating enzyme]-L-cysteine + [acceptor protein]-L-lysine = [E2 ubiquitin-conjugating enzyme]-L-cysteine + N(6)-ubiquitinyl-[acceptor protein]-L-lysine.. The protein operates within protein modification; protein ubiquitination. Functionally, E3 ubiquitin-protein ligase that acts as a negative regulator of mTORC1 signaling by mediating ubiquitination of RagA/RRAGA and RHEB. Catalyzes 'Lys-63'-linked polyubiquitination of RagA/RRAGA in response to amino acid starvation, thereby regulating mTORC1 signaling. Also mediates monoubiquitination of RHEB, promoting its association with the TSC-TBC complex and subsequent inhibition. Also mediates 'Lys-48'-linked polyubiquitination of target proteins and their subsequent targeting to the proteasome for degradation. Induces apoptosis when overexpressed. The chain is E3 ubiquitin-protein ligase RNF152 from Rattus norvegicus (Rat).